A 251-amino-acid chain; its full sequence is Triosephosphate isomerase (251 aa).

9-11 (NWK) contributes to the substrate binding site. His94 acts as the Electrophile in catalysis. Glu166 serves as the catalytic Proton acceptor. Substrate contacts are provided by residues Gly172, Ser211, and 232-233 (GG).

Belongs to the triosephosphate isomerase family. In terms of assembly, homodimer.

The protein resides in the cytoplasm. It carries out the reaction D-glyceraldehyde 3-phosphate = dihydroxyacetone phosphate. Its pathway is carbohydrate biosynthesis; gluconeogenesis. It functions in the pathway carbohydrate degradation; glycolysis; D-glyceraldehyde 3-phosphate from glycerone phosphate: step 1/1. Involved in the gluconeogenesis. Catalyzes stereospecifically the conversion of dihydroxyacetone phosphate (DHAP) to D-glyceraldehyde-3-phosphate (G3P). The polypeptide is Triosephosphate isomerase (Xanthomonas oryzae pv. oryzae (strain MAFF 311018)).